The sequence spans 297 residues: MQRIALSDKLELSRIVYGMWRIGDDADTSPAHVQAKIEACLAQGITTMDQADIYGGYTAEAILGGGLKAAPGLRDKIEIVTKCGIVAPAGRHSSARVKHYDTTAGHINVSVEASLRDMGTDHVDLLLIHRPDPLIDAEETGKALDALVASGKVKAVGVSNFRPWDFSLLQSAMSNRLVTNQIEMSLLATDTFTNGDLAYLQEKRVSPMAWSPLGGGSLFSGAYGGTMAALQRIGKEQGVDATAVAIAWLLRHPAKIVPVLGTNNLERIRTAADALRVTMDRQTWFELYTLAIGKEVA.

Residues W20, R21, and D49 each contribute to the NADP(+) site. Y54 acts as the Proton donor in catalysis. D-glucose-binding residues include Y54, K98, H129, and R130. The NADP(+) site is built by S159, N160, Q181, S211, L213, G215, G261, T262, N263, and R267.

The protein belongs to the aldo/keto reductase family. Homotrimer.

It carries out the reaction D-glucose + NADP(+) = 6-dehydro-D-glucose + NADPH + H(+). Part of the sulfoquinovose monooxygenase (sulfo-SMO) pathway, a D-sulfoquinovose degradation pathway that enables the complete utilization of all carbons within sulfoquinovose (SQ) with concomitant production of inorganic sulfite. Catalyzes the NADP-dependent reduction of 6-dehydro-D-glucose to D-glucose. Cannot use NADH. This is 6-dehydroglucose reductase from Agrobacterium fabrum (strain C58 / ATCC 33970) (Agrobacterium tumefaciens (strain C58)).